The sequence spans 127 residues: Large ribosomal subunit protein bL20c (127 aa).

The protein belongs to the bacterial ribosomal protein bL20 family.

The protein resides in the plastid. The protein localises to the chloroplast. In terms of biological role, binds directly to 23S ribosomal RNA and is necessary for the in vitro assembly process of the 50S ribosomal subunit. It is not involved in the protein synthesizing functions of that subunit. This Jasminum nudiflorum (Winter jasmine) protein is Large ribosomal subunit protein bL20c.